The following is a 366-amino-acid chain: MASLSEFVSEPISMMSQTSAASESQCYYNETIAFFYNRSGKYLATEWNAVSKLVMGLGITVCIFIMLANLLVMVAIYVNRRFHFPIYYLMANLAAADFFAGLAYFYLMFNTGPNTRRLTVSTWLLRQGLIDTSLTASVANLLAIAIERHITVFRMQLHTRMSNRRVVVVIVVIWTVAIVMGAIPSVGWNCICDLEQCSNMAPLYSDSYLIFWTIFNLVTFVVMVVLYAHIFVYVRQKTMRMSRHSSGPRRNRDTMMSLLKTVVIVLGAFIVCWTPGLVLLLLDICCPQCNILAYEKFFLLLAEFNSAMNPIIYSYRDKEMSATFKQILCCQRTENVNGPTEGSDRSASSLNHTILAGVHSNDHSVV.

Residues Met-1–Lys-52 are Extracellular-facing. 2 disulfide bridges follow: Cys-26-Cys-192 and Cys-190-Cys-197. 2 N-linked (GlcNAc...) asparagine glycosylation sites follow: Asn-29 and Asn-37. Lys-41 contacts a 1-acyl-sn-glycero-3-phosphate. Residues Leu-53 to Tyr-77 traverse the membrane as a helical segment. Residues Val-78–Pro-85 lie on the Cytoplasmic side of the membrane. The helical transmembrane segment at Ile-86–Phe-109 threads the bilayer. Residues Asn-110–Trp-123 are Extracellular-facing. A helical transmembrane segment spans residues Leu-124–Ile-146. Arg-126–Asp-131 provides a ligand contact to a 1-acyl-sn-glycero-3-phosphate. Over Glu-147 to Arg-165 the chain is Cytoplasmic. A helical transmembrane segment spans residues Val-166 to Val-186. The Extracellular segment spans residues Gly-187–Asp-206. A helical membrane pass occupies residues Ser-207–Tyr-227. Trp-212 contributes to the a 1-acyl-sn-glycero-3-phosphate binding site. Topologically, residues Ala-228 to Ser-257 are cytoplasmic. Residues Leu-258–Leu-282 traverse the membrane as a helical segment. Residues Asp-283–Lys-296 are Extracellular-facing. A disulfide bridge connects residues Cys-286 and Cys-289. The chain crosses the membrane as a helical span at residues Phe-297–Asp-317. Residues Lys-318 to Val-366 lie on the Cytoplasmic side of the membrane.

Belongs to the G-protein coupled receptor 1 family. Expressed at high levels in oocytes and at lower levels in brain and spinal cord. Below detection level in lung, heart, kidney, liver, muscle, stomach, and intestine.

The protein resides in the cell surface. It localises to the cell membrane. The protein localises to the endosome. Receptor for lysophosphatidic acid (LPA). Plays a role in the reorganization of the actin cytoskeleton, cell migration, differentiation and proliferation, and thereby contributes to the responses to tissue damage and infectious agents. Activates downstream signaling cascades via the G(i)/G(o), G(12)/G(13), and G(q) families of heteromeric G proteins. Signaling inhibits adenylyl cyclase activity and decreases cellular cAMP levels. Signaling triggers an increase of cytoplasmic Ca(2+) levels. Signaling leads to the activation of phospholipase C (PLC) and the formation of inositol 1,4,5-trisphosphate. Signaling mediates activation of down-stream MAP kinases. Contributes to the regulation of cell shape. Promotes Rho-dependent reorganization of the actin cytoskeleton in neuronal cells and neurite retraction. Promotes the activation of Rho and the formation of actin stress fibers. Promotes formation of lamellipodia at the leading edge of migrating cells via activation of Rac. Through its function as lysophosphatidic acid receptor, plays a role in chemotaxis and cell migration, including responses to injury and wounding. Promotes cell proliferation in response to lysophosphatidic acid. This is Lysophosphatidic acid receptor 1-A (lpar1-a) from Xenopus laevis (African clawed frog).